Consider the following 139-residue polypeptide: MGAMPRVQSVVAPILREDPRLAGVTIVTWVPDIDFREFPMINIRRIGGIRNANAPKLHSLPVVEMSAYSTDGLIECEELYETALEVLYDAVKNGTQTPAGYLSSIFETMGATQFSSLYQDSWRIQGLIRLGVRTPRSTT.

The protein is Gene 22 protein (22) of Mycobacterium phage D29 (Mycobacteriophage D29).